The chain runs to 513 residues: NADH-quinone oxidoreductase chain 13 (513 aa).

14 helical membrane-spanning segments follow: residues 3-23 (NLLS…ALFL), 34-54 (AKWL…FVLF), 81-101 (VDGI…LTIL), 112-132 (EYMI…TALD), 133-153 (LVLF…IIGI), 164-184 (FKFF…MIAM), 211-231 (MTVV…SFAV), 250-270 (PTAG…YGFL), 277-297 (FPVA…IAIV), 312-332 (VIAY…FAAN), 340-360 (IFQM…VGVI), 383-403 (AAVF…SGFV), 418-438 (WVAL…LWLY), and 463-483 (WVFI…RLVT).

The protein belongs to the complex I subunit 4 family. NDH-1 is composed of at least 14 different subunits, Nqo1 to Nqo14. The complex has a L-shaped structure, with the hydrophobic arm (subunits Nqo7, Nqo8, Nqo10 to Nqo14) embedded in the inner membrane and the hydrophilic peripheral arm (subunits Nqo1 to Nqo6, Nqo9) protruding into the bacterial cytoplasm. The hydrophilic domain contains all the redox centers.

The protein localises to the cell inner membrane. The enzyme catalyses a quinone + NADH + 5 H(+)(in) = a quinol + NAD(+) + 4 H(+)(out). Functionally, NDH-1 shuttles electrons from NADH, via FMN and iron-sulfur (Fe-S) centers, to quinones in the respiratory chain. The immediate electron acceptor for the enzyme in this species is believed to be ubiquinone. Couples the redox reaction to proton translocation (for every two electrons transferred, four hydrogen ions are translocated across the cytoplasmic membrane), and thus conserves the redox energy in a proton gradient. This is NADH-quinone oxidoreductase chain 13 from Paracoccus denitrificans.